Consider the following 339-residue polypeptide: Phenylalanine--tRNA ligase alpha subunit (339 aa).

Glu-253 serves as a coordination point for Mg(2+).

The protein belongs to the class-II aminoacyl-tRNA synthetase family. Phe-tRNA synthetase alpha subunit type 1 subfamily. Tetramer of two alpha and two beta subunits. It depends on Mg(2+) as a cofactor.

It is found in the cytoplasm. It catalyses the reaction tRNA(Phe) + L-phenylalanine + ATP = L-phenylalanyl-tRNA(Phe) + AMP + diphosphate + H(+). The polypeptide is Phenylalanine--tRNA ligase alpha subunit (Geobacter sulfurreducens (strain ATCC 51573 / DSM 12127 / PCA)).